Consider the following 427-residue polypeptide: Glutamate-1-semialdehyde 2,1-aminomutase (427 aa).

K265 bears the N6-(pyridoxal phosphate)lysine mark.

This sequence belongs to the class-III pyridoxal-phosphate-dependent aminotransferase family. HemL subfamily. In terms of assembly, homodimer. It depends on pyridoxal 5'-phosphate as a cofactor.

Its subcellular location is the cytoplasm. It catalyses the reaction (S)-4-amino-5-oxopentanoate = 5-aminolevulinate. The protein operates within porphyrin-containing compound metabolism; protoporphyrin-IX biosynthesis; 5-aminolevulinate from L-glutamyl-tRNA(Glu): step 2/2. The protein is Glutamate-1-semialdehyde 2,1-aminomutase of Pseudomonas aeruginosa (strain UCBPP-PA14).